The chain runs to 128 residues: Large ribosomal subunit protein bL21 (128 aa).

The segment at Gly104–His128 is disordered. The span at Glu116–His128 shows a compositional bias: basic and acidic residues.

Belongs to the bacterial ribosomal protein bL21 family. As to quaternary structure, part of the 50S ribosomal subunit. Contacts protein L20.

Its function is as follows. This protein binds to 23S rRNA in the presence of protein L20. The sequence is that of Large ribosomal subunit protein bL21 from Nitrobacter hamburgensis (strain DSM 10229 / NCIMB 13809 / X14).